The chain runs to 418 residues: Gamma-glutamyl phosphate reductase (418 aa).

It belongs to the gamma-glutamyl phosphate reductase family.

The protein resides in the cytoplasm. The catalysed reaction is L-glutamate 5-semialdehyde + phosphate + NADP(+) = L-glutamyl 5-phosphate + NADPH + H(+). It participates in amino-acid biosynthesis; L-proline biosynthesis; L-glutamate 5-semialdehyde from L-glutamate: step 2/2. Catalyzes the NADPH-dependent reduction of L-glutamate 5-phosphate into L-glutamate 5-semialdehyde and phosphate. The product spontaneously undergoes cyclization to form 1-pyrroline-5-carboxylate. The sequence is that of Gamma-glutamyl phosphate reductase from Geotalea uraniireducens (strain Rf4) (Geobacter uraniireducens).